The following is a 1009-amino-acid chain: DNA ligase 3 (1009 aa).

The transit peptide at 1-42 (MSLAFKIFFPQTLRALSRKELCLFRKHHWRDVRQFSQWSETD) directs the protein to the mitochondrion. The PARP-type zinc finger occupies 93 to 185 (FCVDYAKRGT…QITQHIADLS (93 aa)). Positions 105, 108, 139, and 142 each coordinate Zn(2+). 4 positions are modified to phosphoserine: serine 210, serine 216, serine 227, and serine 242. Positions 224 to 256 (RKFSGFSAKPNNSGEAPSSPTPKRSLSSSKCDP) are disordered. Residues 240–252 (PSSPTPKRSLSSS) are compositionally biased toward low complexity. Interaction with DNA stretches follow at residues 277-280 (PSYN), 318-323 (VYNLND), 388-391 (TKED), and 421-427 (KMNSGAK). Glutamate 506 contributes to the ATP binding site. Residue lysine 508 is the N6-AMP-lysine intermediate of the active site. Arginine 513 and arginine 528 together coordinate ATP. 2 residues coordinate Mg(2+): glutamate 560 and glutamate 655. Residues lysine 660, arginine 671, and lysine 675 each contribute to the ATP site. The interval 842–917 (AGDEGSSTTG…LATKSSPVKV (76 aa)) is disordered. Low complexity-rich tracts occupy residues 845–854 (EGSSTTGGSS) and 863–877 (SAVS…SAST). Positions 884 to 898 (LSNSNSKDGNMQTAK) are enriched in polar residues. Serine 913 is subject to Phosphoserine. A BRCT domain is found at 933–1009 (VLLDIFTGVR…IRKRRLVAPC (77 aa)).

Belongs to the ATP-dependent DNA ligase family. As to quaternary structure, isoform 3 interacts (via BRCT domain) with the nuclear DNA-repair protein XRCC1. Interacts with POLG. Interacts with POLB. The cofactor is Mg(2+). As to expression, testis, thymus, prostate and heart.

The protein localises to the mitochondrion. Its subcellular location is the nucleus. The enzyme catalyses ATP + (deoxyribonucleotide)n-3'-hydroxyl + 5'-phospho-(deoxyribonucleotide)m = (deoxyribonucleotide)n+m + AMP + diphosphate.. In terms of biological role, isoform 3 functions as a heterodimer with DNA-repair protein XRCC1 in the nucleus and can correct defective DNA strand-break repair and sister chromatid exchange following treatment with ionizing radiation and alkylating agents. Isoform 1 is targeted to mitochondria, where it functions as a DNA ligase in mitochondrial base-excision DNA repair. This chain is DNA ligase 3 (LIG3), found in Homo sapiens (Human).